The primary structure comprises 319 residues: Putative G-protein coupled receptor B0244.7 (319 aa).

Asn28 carries an N-linked (GlcNAc...) asparagine glycan. Transmembrane regions (helical) follow at residues 49 to 69 (AIFI…IYIF), 107 to 127 (LPVI…FIIF), 131 to 151 (SFLS…IAVV), 166 to 186 (VLLI…CGIV), 206 to 226 (GPVL…CLVI), and 261 to 281 (LFAG…SAII).

The protein belongs to the G-protein coupled receptor 1 family. B0244 subfamily.

It is found in the cell membrane. This Caenorhabditis elegans protein is Putative G-protein coupled receptor B0244.7.